Here is a 198-residue protein sequence, read N- to C-terminus: uncharacterized protein (198 aa).

The region spanning 11 to 71 (EGTHKAILSA…DSFLSTATDR (61 aa)) is the HTH tetR-type domain. The segment at residues 34 to 53 (TVDKIAERAKVSKATIYKWW) is a DNA-binding region (H-T-H motif).

This is an uncharacterized protein from Bacillus subtilis (strain 168).